A 346-amino-acid chain; its full sequence is UPF0283 membrane protein VP1870 (346 aa).

Residues 1–30 (MSELKQKQIFSEKALEKEQQSDSPELTAQK) are disordered. Polar residues predominate over residues 21-30 (SDSPELTAQK). The next 2 membrane-spanning stretches (helical) occupy residues 73–93 (VFATFAGLVGWQAVDSVVTAV) and 98–118 (WLALGWVGFITAVASLGLGAI).

Belongs to the UPF0283 family.

The protein localises to the cell inner membrane. The chain is UPF0283 membrane protein VP1870 from Vibrio parahaemolyticus serotype O3:K6 (strain RIMD 2210633).